The primary structure comprises 388 residues: Alanine racemase (388 aa).

The Proton acceptor; specific for D-alanine role is filled by Lys44. Lys44 bears the N6-(pyridoxal phosphate)lysine mark. Position 142 (Arg142) interacts with substrate. The Proton acceptor; specific for L-alanine role is filled by Tyr273. Residue Met321 coordinates substrate.

This sequence belongs to the alanine racemase family. Pyridoxal 5'-phosphate is required as a cofactor.

The enzyme catalyses L-alanine = D-alanine. Its pathway is amino-acid biosynthesis; D-alanine biosynthesis; D-alanine from L-alanine: step 1/1. Functionally, catalyzes the interconversion of L-alanine and D-alanine. May also act on other amino acids. The protein is Alanine racemase (alr) of Mycobacterium leprae (strain TN).